The primary structure comprises 308 residues: Nodulation protein D 1 (308 aa).

Positions 6 to 63 (LDLNLLVALDALMTERKLTAAARRINLSQPAMSAAIARLRTYFGDELFSMQGRELIPT) constitute an HTH lysR-type domain. The segment at residues 23-42 (LTAAARRINLSQPAMSAAIA) is a DNA-binding region (H-T-H motif).

Belongs to the LysR transcriptional regulatory family.

Its function is as follows. NodD regulates the expression of the nodABCFE genes which encode other nodulation proteins. NodD is also a negative regulator of its own expression. Binds flavonoids as inducers. In Rhizobium meliloti (strain 1021) (Ensifer meliloti), this protein is Nodulation protein D 1 (nodD1).